We begin with the raw amino-acid sequence, 127 residues long: Aspartate 1-decarboxylase (127 aa).

Ser-25 serves as the catalytic Schiff-base intermediate with substrate; via pyruvic acid. Ser-25 carries the post-translational modification Pyruvic acid (Ser). Thr-57 is a substrate binding site. The Proton donor role is filled by Tyr-58. Substrate is bound at residue 73-75 (GAA).

This sequence belongs to the PanD family. In terms of assembly, heterooctamer of four alpha and four beta subunits. Pyruvate is required as a cofactor. In terms of processing, is synthesized initially as an inactive proenzyme, which is activated by self-cleavage at a specific serine bond to produce a beta-subunit with a hydroxyl group at its C-terminus and an alpha-subunit with a pyruvoyl group at its N-terminus.

The protein resides in the cytoplasm. The catalysed reaction is L-aspartate + H(+) = beta-alanine + CO2. It participates in cofactor biosynthesis; (R)-pantothenate biosynthesis; beta-alanine from L-aspartate: step 1/1. Its function is as follows. Catalyzes the pyruvoyl-dependent decarboxylation of aspartate to produce beta-alanine. This chain is Aspartate 1-decarboxylase, found in Clostridium botulinum (strain ATCC 19397 / Type A).